The sequence spans 272 residues: Exosome complex component MTR3 (272 aa).

The segment at 1–36 (MPGDHRRIRGPEESQPPQLYAADEEEAPGTRDPTRL) is disordered.

The protein belongs to the RNase PH family. Component of the RNA exosome core complex (Exo-9), composed of EXOSC1, EXOSC2, EXOSC3, EXOSC4, EXOSC5, EXOSC6, EXOSC7, EXOSC8 and EXOSC9; within the complex interacts with EXOSC1, EXOSC7 and EXOSC8. The catalytically inactive Exo-9 may associate with the catalytic subunit EXOSC10/RRP6. Exo-9 may associate with DIS3 to form the nucleolar exosome complex, or DIS3L to form the cytoplasmic exosome complex. Exo-9 is formed by a hexameric base ring consisting of the heterodimers EXOSC4-EXOSC9, EXOSC5-EXOSC8 and EXOSC6-EXOSC7, and a cap ring consisting of EXOSC1, EXOSC2 and EXOSC3. The RNA exosome complex associates with cofactors EXOSC10/RRP6, C1D/RRP47, MPHOSPH6/MPP6 and MTREX/MTR4.

It is found in the cytoplasm. The protein localises to the nucleus. The protein resides in the nucleolus. Functionally, non-catalytic component of the RNA exosome complex which has 3'-&gt;5' exoribonuclease activity and participates in a multitude of cellular RNA processing and degradation events. In the nucleus, the RNA exosome complex is involved in proper maturation of stable RNA species such as rRNA, snRNA and snoRNA, in the elimination of RNA processing by-products and non-coding 'pervasive' transcripts, such as antisense RNA species and promoter-upstream transcripts (PROMPTs), and of mRNAs with processing defects, thereby limiting or excluding their export to the cytoplasm. The RNA exosome may be involved in Ig class switch recombination (CSR) and/or Ig variable region somatic hypermutation (SHM) by targeting AICDA deamination activity to transcribed dsDNA substrates. In the cytoplasm, the RNA exosome complex is involved in general mRNA turnover and specifically degrades inherently unstable mRNAs containing AU-rich elements (AREs) within their 3' untranslated regions, and in RNA surveillance pathways, preventing translation of aberrant mRNAs. It seems to be involved in degradation of histone mRNA. The catalytic inactive RNA exosome core complex of 9 subunits (Exo-9) is proposed to play a pivotal role in the binding and presentation of RNA for ribonucleolysis, and to serve as a scaffold for the association with catalytic subunits and accessory proteins or complexes. In Homo sapiens (Human), this protein is Exosome complex component MTR3 (EXOSC6).